A 190-amino-acid chain; its full sequence is Spermatogenesis-associated protein 12 (190 aa).

Expressed in testis.

This Homo sapiens (Human) protein is Spermatogenesis-associated protein 12 (SPATA12).